Consider the following 342-residue polypeptide: Forkhead box protein D5-C (342 aa).

The tract at residues 1-89 (MNLSQDSSAH…KHSLDTTTNG (89 aa)) is disordered. The span at 20–34 (SDDEDEIDILGEDDP) shows a compositional bias: acidic residues. The span at 59–70 (SKLSCNESASHS) shows a compositional bias: polar residues. Positions 71–83 (SGERERGTSKHSL) are enriched in basic and acidic residues. Residues 97–191 (KPPYSYIALI…DNGSFLRRRK (95 aa)) constitute a DNA-binding region (fork-head).

At the onset of gastrulation, expressed in the superficial layer of cells in the dorsal blastopore lip (Spemann organizer). In the open neural plate, expressed in a row of cells destined to become the floor plate of the neural tube. After neural tube closure, only detected in the tailtip and a small area located at the midbrain/hindbrain boundary.

It is found in the nucleus. Its function is as follows. Transcriptional repressor. The sequence is that of Forkhead box protein D5-C (foxd5-c) from Xenopus laevis (African clawed frog).